Here is a 135-residue protein sequence, read N- to C-terminus: Histone H1, macronuclear (135 aa).

Low complexity predominate over residues methionine 1 to lysine 17. The disordered stretch occupies residues methionine 1–asparagine 135. 2 stretches are compositionally biased toward basic residues: residues serine 18 to proline 54 and lysine 62 to threonine 79. Residues lysine 80–lysine 112 show a composition bias toward low complexity. The span at alanine 113–asparagine 135 shows a compositional bias: basic residues.

The protein resides in the nucleus. It localises to the chromosome. Histones H1 are necessary for the condensation of nucleosome chains into higher-order structures. This is Histone H1, macronuclear from Euplotes eurystomus (Ciliate).